A 180-amino-acid polypeptide reads, in one-letter code: Probable chorismate pyruvate-lyase (180 aa).

Positions 73, 111, and 170 each coordinate substrate.

Belongs to the UbiC family.

The protein localises to the cytoplasm. It carries out the reaction chorismate = 4-hydroxybenzoate + pyruvate. Its pathway is cofactor biosynthesis; ubiquinone biosynthesis. In terms of biological role, removes the pyruvyl group from chorismate, with concomitant aromatization of the ring, to provide 4-hydroxybenzoate (4HB) for the ubiquinone pathway. The protein is Probable chorismate pyruvate-lyase of Nitrosospira multiformis (strain ATCC 25196 / NCIMB 11849 / C 71).